Reading from the N-terminus, the 443-residue chain is Glutamyl-tRNA reductase (443 aa).

Substrate-binding positions include 49-52, Ser109, 114-116, and Gln120; these read TCNR and EPQ. The Nucleophile role is filled by Cys50. 189-194 is a binding site for NADP(+); the sequence is GAGKMC. Positions 421 to 443 are disordered; the sequence is PDSQQTGGDSVEKDADSKQDLTS. A compositionally biased stretch (basic and acidic residues) spans 430–443; it reads SVEKDADSKQDLTS.

It belongs to the glutamyl-tRNA reductase family. As to quaternary structure, homodimer.

The enzyme catalyses (S)-4-amino-5-oxopentanoate + tRNA(Glu) + NADP(+) = L-glutamyl-tRNA(Glu) + NADPH + H(+). Its pathway is porphyrin-containing compound metabolism; protoporphyrin-IX biosynthesis; 5-aminolevulinate from L-glutamyl-tRNA(Glu): step 1/2. Functionally, catalyzes the NADPH-dependent reduction of glutamyl-tRNA(Glu) to glutamate 1-semialdehyde (GSA). This Syntrophotalea carbinolica (strain DSM 2380 / NBRC 103641 / GraBd1) (Pelobacter carbinolicus) protein is Glutamyl-tRNA reductase.